The primary structure comprises 246 residues: Type III pantothenate kinase (246 aa).

ATP is bound at residue 11–18 (DIGNSFIK). Residues Tyr-95 and 102–105 (GVDR) contribute to the substrate site. Asp-104 (proton acceptor) is an active-site residue. Position 125 (Asp-125) interacts with K(+). Thr-128 contacts ATP. Thr-179 is a binding site for substrate.

The protein belongs to the type III pantothenate kinase family. In terms of assembly, homodimer. NH4(+) is required as a cofactor. It depends on K(+) as a cofactor.

The protein localises to the cytoplasm. It carries out the reaction (R)-pantothenate + ATP = (R)-4'-phosphopantothenate + ADP + H(+). It functions in the pathway cofactor biosynthesis; coenzyme A biosynthesis; CoA from (R)-pantothenate: step 1/5. Functionally, catalyzes the phosphorylation of pantothenate (Pan), the first step in CoA biosynthesis. In Pseudoalteromonas atlantica (strain T6c / ATCC BAA-1087), this protein is Type III pantothenate kinase.